The sequence spans 225 residues: Flagellar transcriptional regulator FlhC (225 aa).

The Zn(2+) site is built by Cys149, Cys152, Cys169, and Cys172.

The protein belongs to the FlhC family. In terms of assembly, heterohexamer composed of two FlhC and four FlhD subunits. Each FlhC binds a FlhD dimer, forming a heterotrimer, and a hexamer assembles by dimerization of two heterotrimers. The cofactor is Zn(2+).

Its subcellular location is the cytoplasm. Functionally, functions in complex with FlhD as a master transcriptional regulator that regulates transcription of several flagellar and non-flagellar operons by binding to their promoter region. Activates expression of class 2 flagellar genes, including fliA, which is a flagellum-specific sigma factor that turns on the class 3 genes. Also regulates genes whose products function in a variety of physiological pathways. In Burkholderia lata (strain ATCC 17760 / DSM 23089 / LMG 22485 / NCIMB 9086 / R18194 / 383), this protein is Flagellar transcriptional regulator FlhC.